The primary structure comprises 582 residues: Semenogelin-2 (582 aa).

Positions 1–23 (MKSIILFVLSLLLILEKQAAVMG) are cleaved as a signal peptide. 6 disordered regions span residues 26 to 65 (CGSK…SFSI), 132 to 159 (GGQA…SSQY), 272 to 295 (NLNQ…RTEE), 318 to 358 (TEEK…ERHL), 379 to 417 (EEQI…EERR), and 439 to 582 (EEQI…PVST). Composition is skewed to polar residues over residues 31-40 (QLPSGSSQFP) and 137-159 (RGTQ…SSQY). A compositionally biased stretch (polar residues) spans 325–335 (KSQNQVTIHSQ). The span at 336–345 (GQEHGHKENK) shows a compositional bias: basic and acidic residues. Composition is skewed to polar residues over residues 379-397 (EEQI…SQAQ), 439-457 (EEQI…SQAQ), 487-496 (KDVSQSSTSF), and 506-524 (SQIQ…QNAK). Composition is skewed to basic and acidic residues over residues 525–552 (GKSD…ESSE) and 559–582 (TEHE…PVST).

This sequence belongs to the semenogelin family. Interacts with SERPINA5.

It is found in the secreted. Functionally, participates in the formation of a gel matrix (sperm coagulum) entrapping the accessory gland secretions and ejaculated spermatozoa. The chain is Semenogelin-2 (SEMG2) from Hylobates lar (Lar gibbon).